The chain runs to 190 residues: Remorin (190 aa).

Residues 1 to 12 (MAEEQKTSKVDV) are compositionally biased toward basic and acidic residues. Disordered regions lie at residues 1–45 (MAEE…VESK) and 50–69 (VEKPIEEHTPKKASSGSADR). Position 14 is a phosphoserine (serine 14). Threonine 58 carries the post-translational modification Phosphothreonine. Residues 92-147 (EKSKAENRAQKKISDVHAWENSKKAAVEAQLRKIEEKLEKKKAQYGEKMKNKVAAI) adopt a coiled-coil conformation.

Belongs to the remorin family. In terms of assembly, may polymerize to form filamentous structures. In terms of tissue distribution, expressed in roots, leaves, stems, flowers and siliques, with a maximal expression in apical regions.

Exhibits a non sequence-specific DNA-binding activity. The protein is Remorin (DBP) of Arabidopsis thaliana (Mouse-ear cress).